The primary structure comprises 205 residues: Large ribosomal subunit protein uL3c (205 aa).

The segment at 127-153 (HFSRGPMSHGSKNHRQPGSIGAGTTPG) is disordered.

It belongs to the universal ribosomal protein uL3 family. In terms of assembly, part of the 50S ribosomal subunit.

It localises to the plastid. The protein localises to the chloroplast. Functionally, one of the primary rRNA binding proteins, it binds directly near the 3'-end of the 23S rRNA, where it nucleates assembly of the 50S subunit. This chain is Large ribosomal subunit protein uL3c (rpl3), found in Porphyra purpurea (Red seaweed).